We begin with the raw amino-acid sequence, 201 residues long: Orotate phosphoribosyltransferase (201 aa).

113 to 121 (EDIITTGKS) lines the 5-phospho-alpha-D-ribose 1-diphosphate pocket. Orotate is bound by residues Thr117 and Arg145.

This sequence belongs to the purine/pyrimidine phosphoribosyltransferase family. PyrE subfamily. As to quaternary structure, homodimer. The cofactor is Mg(2+).

It catalyses the reaction orotidine 5'-phosphate + diphosphate = orotate + 5-phospho-alpha-D-ribose 1-diphosphate. It functions in the pathway pyrimidine metabolism; UMP biosynthesis via de novo pathway; UMP from orotate: step 1/2. Its function is as follows. Catalyzes the transfer of a ribosyl phosphate group from 5-phosphoribose 1-diphosphate to orotate, leading to the formation of orotidine monophosphate (OMP). In Helicobacter acinonychis (strain Sheeba), this protein is Orotate phosphoribosyltransferase.